The chain runs to 148 residues: Snaclec 3 (148 aa).

The signal sequence occupies residues 1-23 (MGRFISVSFGLLVVFLSLSGTEA). 3 disulfides stabilise this stretch: cysteine 27–cysteine 38, cysteine 55–cysteine 144, and cysteine 121–cysteine 136. A C-type lectin domain is found at 34–145 (YDQNCYKVFT…CSSTHNFVCK (112 aa)).

It belongs to the snaclec family. Heterodimer; disulfide-linked.

The protein localises to the secreted. In terms of biological role, interferes with one step of hemostasis (modulation of platelet aggregation, or coagulation cascade, for example). This Daboia siamensis (Eastern Russel's viper) protein is Snaclec 3.